A 360-amino-acid polypeptide reads, in one-letter code: Coiled-coil domain-containing protein 86 (360 aa).

The segment covering 1–12 (MDTPLRRSRRLG) has biased composition (basic residues). Disordered regions lie at residues 1-314 (MDTP…ENER) and 328-360 (LKRA…AAKI). Residues Ser21, Ser24, Ser47, Ser50, and Ser58 each carry the phosphoserine modification. Thr65 bears the Phosphothreonine mark. A phosphoserine mark is found at Ser66, Ser69, Ser80, Ser91, Ser102, Ser110, Ser113, and Ser128. Residues 66-83 (SPGSPRLQQGSGLESPQG) show a composition bias toward polar residues. Over residues 153-164 (QLPPVPGSPEPY) the composition is skewed to pro residues. Phosphoserine occurs at positions 188, 217, and 218. Residues 238-254 (GKPKSGRVWKDRSKKRF) show a composition bias toward basic residues. Positions 272-323 (KERQERKLAKDFARHLEEEKERRRQEKKQRRAENLKRRLENERKAEVVQVIR) form a coiled coil. Basic and acidic residues-rich tracts occupy residues 273 to 295 (ERQE…ERRR) and 302 to 314 (RAEN…ENER). A Citrulline modification is found at Arg342.

In terms of processing, citrullinated by PADI4.

The protein localises to the nucleus. The protein resides in the chromosome. It localises to the nucleolus. Its function is as follows. Required for proper chromosome segregation during mitosis and error-free mitotic progression. The sequence is that of Coiled-coil domain-containing protein 86 from Pongo abelii (Sumatran orangutan).